Here is a 255-residue protein sequence, read N- to C-terminus: Glutamate racemase (255 aa).

Substrate-binding positions include 7 to 8 (DS) and 39 to 40 (YG). The Proton donor/acceptor role is filled by Cys-70. A substrate-binding site is contributed by 71–72 (NT). Catalysis depends on Cys-181, which acts as the Proton donor/acceptor. 182–183 (TH) contacts substrate.

This sequence belongs to the aspartate/glutamate racemases family.

The catalysed reaction is L-glutamate = D-glutamate. The protein operates within cell wall biogenesis; peptidoglycan biosynthesis. Functionally, provides the (R)-glutamate required for cell wall biosynthesis. This chain is Glutamate racemase, found in Helicobacter acinonychis (strain Sheeba).